We begin with the raw amino-acid sequence, 143 residues long: Ribosomal RNA large subunit methyltransferase H (143 aa).

Residues Leu68 and Gly95 each contribute to the S-adenosyl-L-methionine site.

Belongs to the RNA methyltransferase RlmH family. In terms of assembly, homodimer.

It localises to the cytoplasm. The catalysed reaction is pseudouridine(1915) in 23S rRNA + S-adenosyl-L-methionine = N(3)-methylpseudouridine(1915) in 23S rRNA + S-adenosyl-L-homocysteine + H(+). Specifically methylates the pseudouridine at position 1915 (m3Psi1915) in 23S rRNA. The chain is Ribosomal RNA large subunit methyltransferase H from Mycoplasma mobile (strain ATCC 43663 / 163K / NCTC 11711) (Mesomycoplasma mobile).